The primary structure comprises 498 residues: Galactose-1-phosphate uridylyltransferase (498 aa).

This sequence belongs to the galactose-1-phosphate uridylyltransferase type 2 family.

It is found in the cytoplasm. The catalysed reaction is alpha-D-galactose 1-phosphate + UDP-alpha-D-glucose = alpha-D-glucose 1-phosphate + UDP-alpha-D-galactose. The protein operates within carbohydrate metabolism; galactose metabolism. In Clostridium perfringens (strain 13 / Type A), this protein is Galactose-1-phosphate uridylyltransferase.